Consider the following 506-residue polypeptide: Glycerol kinase (506 aa).

T14 serves as a coordination point for ADP. ATP-binding residues include T14, T15, and S16. T14 is a binding site for sn-glycerol 3-phosphate. R18 provides a ligand contact to ADP. Sn-glycerol 3-phosphate-binding residues include R84, E85, and Y136. Glycerol is bound by residues R84, E85, and Y136. Residue H232 is modified to Phosphohistidine; by HPr. D246 contributes to the sn-glycerol 3-phosphate binding site. Glycerol is bound by residues D246 and Q247. ADP-binding residues include T268 and G311. T268, G311, Q315, and G412 together coordinate ATP. ADP is bound by residues G412 and N416.

The protein belongs to the FGGY kinase family. Homotetramer and homodimer (in equilibrium). Post-translationally, the phosphoenolpyruvate-dependent sugar phosphotransferase system (PTS), including enzyme I, and histidine-containing protein (HPr) are required for the phosphorylation of His-232, which leads to the activation of the enzyme.

The enzyme catalyses glycerol + ATP = sn-glycerol 3-phosphate + ADP + H(+). Its pathway is polyol metabolism; glycerol degradation via glycerol kinase pathway; sn-glycerol 3-phosphate from glycerol: step 1/1. Its activity is regulated as follows. Activated by phosphorylation and inhibited by fructose 1,6-bisphosphate (FBP). Key enzyme in the regulation of glycerol uptake and metabolism. Catalyzes the phosphorylation of glycerol to yield sn-glycerol 3-phosphate. The sequence is that of Glycerol kinase from Enterococcus casseliflavus (Enterococcus flavescens).